A 134-amino-acid chain; its full sequence is uncharacterized protein (134 aa).

The protein belongs to the ycf68 family.

The protein resides in the plastid. It is found in the chloroplast. This is an uncharacterized protein from Saccharum hybrid (Sugarcane).